Reading from the N-terminus, the 150-residue chain is uncharacterized protein (150 aa).

This is an uncharacterized protein from Mycoplasma genitalium (strain ATCC 33530 / DSM 19775 / NCTC 10195 / G37) (Mycoplasmoides genitalium).